A 410-amino-acid chain; its full sequence is Phytoene synthase 1, chloroplastic (410 aa).

The N-terminal 62 residues, 1 to 62 (MAIILVRAAS…EAGRPSPAVY (62 aa)), are a transit peptide targeting the chloroplast.

The protein belongs to the phytoene/squalene synthase family. As to quaternary structure, monomer. Expressed in embryos, endosperm and seedling leaves. Expressed in leaves and endosperm.

The protein localises to the plastid. Its subcellular location is the chloroplast stroma. The catalysed reaction is 2 (2E,6E,10E)-geranylgeranyl diphosphate = 15-cis-phytoene + 2 diphosphate. It functions in the pathway carotenoid biosynthesis; phytoene biosynthesis; all-trans-phytoene from geranylgeranyl diphosphate: step 1/1. Functionally, catalyzes the conversion of geranylgeranyl diphosphate to phytoene. Mediates the first committed step in carotenoid biosynthesis. This Zea mays (Maize) protein is Phytoene synthase 1, chloroplastic.